Consider the following 418-residue polypeptide: Tyrosine--tRNA ligase 1 (418 aa).

Tyr34 is an L-tyrosine binding site. The short motif at 39 to 48 (PTADSLHIGH) is the 'HIGH' region element. L-tyrosine is bound by residues Tyr169 and Gln173. Residues 230-234 (KFGKT) carry the 'KMSKS' region motif. Lys233 contacts ATP. The S4 RNA-binding domain occupies 352–418 (TVLIDLLVES…GKKKYFLIRY (67 aa)).

Belongs to the class-I aminoacyl-tRNA synthetase family. TyrS type 1 subfamily. As to quaternary structure, homodimer.

The protein resides in the cytoplasm. The enzyme catalyses tRNA(Tyr) + L-tyrosine + ATP = L-tyrosyl-tRNA(Tyr) + AMP + diphosphate + H(+). Catalyzes the attachment of tyrosine to tRNA(Tyr) in a two-step reaction: tyrosine is first activated by ATP to form Tyr-AMP and then transferred to the acceptor end of tRNA(Tyr). This chain is Tyrosine--tRNA ligase 1, found in Bacillus cereus (strain ATCC 14579 / DSM 31 / CCUG 7414 / JCM 2152 / NBRC 15305 / NCIMB 9373 / NCTC 2599 / NRRL B-3711).